The following is an 86-amino-acid chain: Chymotrypsin inhibitor (86 aa).

Positions 1–16 (MKTLCIFLVLVVAVAA) are cleaved as a signal peptide. Intrachain disulfides connect C26–C58, C38–C50, C42–C82, and C60–C76. In terms of domain architecture, TIL spans 26-82 (CPPNKEFGSYGDCPPSCLKNPPNFCTLKLNYGCKCKEGYVLTRYQDYESDCIKPEEC).

It belongs to the serine protease inhibitor-like (TIL domain-containing) family. As to expression, only expressed in fat body.

It localises to the secreted. Serine protease inhibitor that inhibits chymotrypsin (IC(50)=34.13 nM, Ki=49.85 nM), microbial serine proteases (subtilisin A (IC(50)=21.31 nM, Ki=20.51 nM) and proteinase K (IC(50)=52.56 nM, Ki=65.42 nM)), as well as human neutrophil elastase (IC(50)=11.54 nM, Ki=8.74 nM), and porcine pancreatic elastase (IC(50)=19.07 nM, Ki=11.32 nM). This Araneus ventricosus (Orbweaver spider) protein is Chymotrypsin inhibitor.